The primary structure comprises 541 residues: Anthranilate synthase component 1 (541 aa).

Residues Ser-61 and 311 to 313 (PYM) contribute to the L-tryptophan site. 348 to 349 (GT) is a binding site for chorismate. Mg(2+) is bound at residue Glu-381. Residues Tyr-469, Arg-489, 503–505 (GAG), and Gly-505 contribute to the chorismate site. Residue Glu-518 coordinates Mg(2+).

Belongs to the anthranilate synthase component I family. As to quaternary structure, heterotetramer consisting of two non-identical subunits: a beta subunit (TrpG) and a large alpha subunit (TrpE). It depends on Mg(2+) as a cofactor.

The enzyme catalyses chorismate + L-glutamine = anthranilate + pyruvate + L-glutamate + H(+). The protein operates within amino-acid biosynthesis; L-tryptophan biosynthesis; L-tryptophan from chorismate: step 1/5. Feedback inhibited by tryptophan. Part of a heterotetrameric complex that catalyzes the two-step biosynthesis of anthranilate, an intermediate in the biosynthesis of L-tryptophan. In the first step, the glutamine-binding beta subunit (TrpG) of anthranilate synthase (AS) provides the glutamine amidotransferase activity which generates ammonia as a substrate that, along with chorismate, is used in the second step, catalyzed by the large alpha subunit of AS (TrpE) to produce anthranilate. In the absence of TrpG, TrpE can synthesize anthranilate directly from chorismate and high concentrations of ammonia. This Vibrio parahaemolyticus serotype O3:K6 (strain RIMD 2210633) protein is Anthranilate synthase component 1 (trpE).